A 529-amino-acid polypeptide reads, in one-letter code: MNNNDLVAKLWKLCDNLRDGGVSYQNYVNELASLLFLKMCKETGQEADYLPEGYRWDDLKSRIGQEQLQFYRNLLVHLGADEKKLVQAVFQNVNTTITQPKQLTELVSSMDSLDWYNGDHGKSRDDFGDMYEGLLQKNANETKSGAGQYFTPRPLIKTIIHLLKPQPREVVQDPAAGTAGFLIEADRYVKSQTNDLDDLDGDAQDFQIKKAFVGLELVPGTRRLALMNCLLHDIEGNLDHGGAIRLGNTLGSDGENLPQADIVATNPPFGSAAGTNITRTFVHPTSNKQLCFMQHIIETLPPGGRAAAVVPDNVLFEGGKGTDIRRDLMDKCHLHTILRLPTGIFYAQGVKTNVLFFTKGTVANPNQDKNCTDDVWVYDLRTNMPSFGKRTPFTEQHLQPFETVYGEDPHGLSPRTEGEWSFNAEESEVADSEENKNADQHQATSRWRKFSREWIRTAKSDSLDISWLKDKDSIDADSLPEPDVLAAEAMGELVQALGELDALMRELGAGDEADAQRQLLEEAFGGVKA.

Residues 148–153 (QYFTPR), 178–180 (TAG), and glutamate 216 contribute to the S-adenosyl-L-methionine site. The interval 424 to 443 (AEESEVADSEENKNADQHQA) is disordered.

Belongs to the N(4)/N(6)-methyltransferase family. The type I restriction/modification system is composed of three polypeptides R, M and S; the restriction enzyme has stoichiometry R(2)M(2)S(1) while the methyltransferase is M(2)S(1).

The enzyme catalyses a 2'-deoxyadenosine in DNA + S-adenosyl-L-methionine = an N(6)-methyl-2'-deoxyadenosine in DNA + S-adenosyl-L-homocysteine + H(+). The subtype gamma methyltransferase (M) subunit of a type I restriction enzyme. The M and S subunits together form a methyltransferase (MTase) that methylates A-2 on the top strand and A-3 on the bottom strand of the sequence 5'-AACN(6)GTRC-3'. In the presence of the R subunit the complex can also act as an endonuclease, binding to the same target sequence but cutting the DNA some distance from this site. Whether the DNA is cut or modified depends on the methylation state of the target sequence. When the target site is unmodified, the DNA is cut. When the target site is hemimethylated, the complex acts as a maintenance MTase modifying the DNA so that both strands become methylated. After locating a non-methylated recognition site, the enzyme complex serves as a molecular motor that translocates DNA in an ATP-dependent manner until a collision occurs that triggers cleavage. The protein is Type I restriction enzyme StySPI methylase subunit of Salmonella potsdam.